We begin with the raw amino-acid sequence, 172 residues long: MDRTAKADLVSTLNGVFNESAVVVVAHYKGLTVADMQKLRAQMKQAGATVKVAKNSLAGIALDGTDVASIKPLLKGPTLLAYSGDPVAAAKVAVDFAKANDKLVILGGAMGKTALNPDGVKALASLPSLDELRAKIVGLVQAPATKIAQVVNAPASKLARVFGAYAKKDEAA.

It belongs to the universal ribosomal protein uL10 family. In terms of assembly, part of the ribosomal stalk of the 50S ribosomal subunit. The N-terminus interacts with L11 and the large rRNA to form the base of the stalk. The C-terminus forms an elongated spine to which L12 dimers bind in a sequential fashion forming a multimeric L10(L12)X complex.

Functionally, forms part of the ribosomal stalk, playing a central role in the interaction of the ribosome with GTP-bound translation factors. This is Large ribosomal subunit protein uL10 from Methylobacterium radiotolerans (strain ATCC 27329 / DSM 1819 / JCM 2831 / NBRC 15690 / NCIMB 10815 / 0-1).